A 208-amino-acid chain; its full sequence is Ras-related protein Rab-6B (208 aa).

Residues glycine 20–threonine 27, threonine 45, aspartate 68–glutamine 72, and asparagine 126–aspartate 129 each bind GTP. The Effector region signature appears at tyrosine 42 to phenylalanine 50. S-geranylgeranyl cysteine attachment occurs at residues cysteine 206 and cysteine 208. Cysteine 208 carries the cysteine methyl ester modification.

This sequence belongs to the small GTPase superfamily. Rab family. As to quaternary structure, interacts (GTP-bound) with BICD1 (via C-terminus); the interaction is direct. Interacts (GDP-bound) with DYNLRB1. Interacts (GTP-bound) with APBA1/MINT1. Interacts (GTP-bound) with VPS13B.

It is found in the golgi apparatus membrane. The protein localises to the endoplasmic reticulum-Golgi intermediate compartment. Its subcellular location is the cytoplasmic vesicle. The enzyme catalyses GTP + H2O = GDP + phosphate + H(+). Regulated by guanine nucleotide exchange factors (GEFs) which promote the exchange of bound GDP for free GTP, GTPase activating proteins (GAPs) which increase the GTP hydrolysis activity, and GDP dissociation inhibitors which inhibit the dissociation of the nucleotide from the GTPase. Functionally, the small GTPases Rab are key regulators of intracellular membrane trafficking, from the formation of transport vesicles to their fusion with membranes. Rabs cycle between active GTP-bound and inactive GDP-bound states. In their active state, drive transport of vesicular carriers from donor organelles to acceptor organelles to regulate the membrane traffic that maintains organelle identity and morphology. Recruits VPS13B to the Golgi membrane. Regulates the compacted morphology of the Golgi. Seems to have a role in retrograde membrane traffic at the level of the Golgi complex. May function in retrograde transport in neuronal cells. Plays a role in neuron projection development. This chain is Ras-related protein Rab-6B (RAB6B), found in Bos taurus (Bovine).